Consider the following 255-residue polypeptide: Hydroxyacylglutathione hydrolase (255 aa).

Zn(2+) contacts are provided by H56, H58, D60, H61, H114, D133, and H171.

It belongs to the metallo-beta-lactamase superfamily. Glyoxalase II family. Monomer. It depends on Zn(2+) as a cofactor.

It carries out the reaction an S-(2-hydroxyacyl)glutathione + H2O = a 2-hydroxy carboxylate + glutathione + H(+). It functions in the pathway secondary metabolite metabolism; methylglyoxal degradation; (R)-lactate from methylglyoxal: step 2/2. Functionally, thiolesterase that catalyzes the hydrolysis of S-D-lactoyl-glutathione to form glutathione and D-lactic acid. This is Hydroxyacylglutathione hydrolase from Cereibacter sphaeroides (strain ATCC 17025 / ATH 2.4.3) (Rhodobacter sphaeroides).